Here is a 40-residue protein sequence, read N- to C-terminus: Photosystem II reaction center protein J (40 aa).

Residues 8 to 28 form a helical membrane-spanning segment; the sequence is IPLWLIGTVAGIAVIGLVGVF.

The protein belongs to the PsbJ family. In terms of assembly, PSII is composed of 1 copy each of membrane proteins PsbA, PsbB, PsbC, PsbD, PsbE, PsbF, PsbH, PsbI, PsbJ, PsbK, PsbL, PsbM, PsbT, PsbX, PsbY, PsbZ, Psb30/Ycf12, at least 3 peripheral proteins of the oxygen-evolving complex and a large number of cofactors. It forms dimeric complexes.

It is found in the plastid. The protein localises to the chloroplast thylakoid membrane. In terms of biological role, one of the components of the core complex of photosystem II (PSII). PSII is a light-driven water:plastoquinone oxidoreductase that uses light energy to abstract electrons from H(2)O, generating O(2) and a proton gradient subsequently used for ATP formation. It consists of a core antenna complex that captures photons, and an electron transfer chain that converts photonic excitation into a charge separation. In Secale cereale (Rye), this protein is Photosystem II reaction center protein J.